Consider the following 467-residue polypeptide: 5'-nucleotidase domain-containing protein 1 (467 aa).

Catalysis depends on Asp16, which acts as the Nucleophile. Residues Asp16 and Asp18 each coordinate Mg(2+). Residue Asp18 is the Proton donor of the active site. An N6-acetyllysine modification is found at Lys181. Residue Asp323 coordinates Mg(2+).

Belongs to the 5'(3')-deoxyribonucleotidase family.

This chain is 5'-nucleotidase domain-containing protein 1 (Nt5dc1), found in Mus musculus (Mouse).